The sequence spans 204 residues: Protein OPG030 (204 aa).

The region spanning 95-177 (FLRQYINNNI…ITYSELTNAI (83 aa)) is the BACK domain.

It belongs to the orthopoxvirus OPG030 family.

The chain is Protein OPG030 (OPG30) from Homo sapiens (Human).